A 633-amino-acid chain; its full sequence is Acetylcholinesterase (633 aa).

The N-terminal stretch at 1–23 is a signal peptide; the sequence is MKILDALLFPVIFIMFFIHLSIA. Cysteines 91 and 118 form a disulfide. Asn-133 and Asn-184 each carry an N-linked (GlcNAc...) asparagine glycan. Ser-225 functions as the Acyl-ester intermediate in the catalytic mechanism. A disulfide bridge connects residues Cys-279 and Cys-290. Asn-283 carries N-linked (GlcNAc...) asparagine glycosylation. The active-site Charge relay system is Glu-352. Asn-368 carries an N-linked (GlcNAc...) asparagine glycan. A disulfide bond links Cys-427 and Cys-579. His-494 (charge relay system) is an active-site residue. Asn-511 and Asn-591 each carry an N-linked (GlcNAc...) asparagine glycan.

Belongs to the type-B carboxylesterase/lipase family.

The protein resides in the synapse. The protein localises to the secreted. Its subcellular location is the cell membrane. It carries out the reaction acetylcholine + H2O = choline + acetate + H(+). In terms of biological role, terminates signal transduction at the neuromuscular junction by rapid hydrolysis of the acetylcholine released into the synaptic cleft. In Electrophorus electricus (Electric eel), this protein is Acetylcholinesterase (ache).